The primary structure comprises 457 residues: D-inositol 3-phosphate glycosyltransferase (457 aa).

Histidine 34 is a binding site for 1D-myo-inositol 3-phosphate. Residues 40 to 41 (QP) and glycine 48 each bind UDP-N-acetyl-alpha-D-glucosamine. 1D-myo-inositol 3-phosphate-binding positions include 45 to 50 (DAGGMN), lysine 103, tyrosine 136, threonine 160, and arginine 180. Arginine 267, lysine 272, and valine 333 together coordinate UDP-N-acetyl-alpha-D-glucosamine. The Mg(2+) site is built by phenylalanine 342, arginine 343, and alanine 345. UDP-N-acetyl-alpha-D-glucosamine-binding residues include glutamate 355 and glutamate 363. Threonine 369 is a Mg(2+) binding site.

The protein belongs to the glycosyltransferase group 1 family. MshA subfamily. Homodimer.

It catalyses the reaction 1D-myo-inositol 3-phosphate + UDP-N-acetyl-alpha-D-glucosamine = 1D-myo-inositol 2-acetamido-2-deoxy-alpha-D-glucopyranoside 3-phosphate + UDP + H(+). In terms of biological role, catalyzes the transfer of a N-acetyl-glucosamine moiety to 1D-myo-inositol 3-phosphate to produce 1D-myo-inositol 2-acetamido-2-deoxy-glucopyranoside 3-phosphate in the mycothiol biosynthesis pathway. The polypeptide is D-inositol 3-phosphate glycosyltransferase (Streptomyces coelicolor (strain ATCC BAA-471 / A3(2) / M145)).